Consider the following 475-residue polypeptide: tRNA-2-methylthio-N(6)-dimethylallyladenosine synthase (475 aa).

The MTTase N-terminal domain occupies 3 to 120 (KKLHIKTWGC…LPEMIDQIKD (118 aa)). 6 residues coordinate [4Fe-4S] cluster: cysteine 12, cysteine 49, cysteine 83, cysteine 157, cysteine 161, and cysteine 164. The Radical SAM core domain maps to 143–375 (RAEGPSAFVS…QDRITQQAMR (233 aa)). One can recognise a TRAM domain in the interval 378 to 441 (RQMVGTVQRI…TNSLRGVFIR (64 aa)).

Belongs to the methylthiotransferase family. MiaB subfamily. As to quaternary structure, monomer. The cofactor is [4Fe-4S] cluster.

The protein resides in the cytoplasm. It catalyses the reaction N(6)-dimethylallyladenosine(37) in tRNA + (sulfur carrier)-SH + AH2 + 2 S-adenosyl-L-methionine = 2-methylsulfanyl-N(6)-dimethylallyladenosine(37) in tRNA + (sulfur carrier)-H + 5'-deoxyadenosine + L-methionine + A + S-adenosyl-L-homocysteine + 2 H(+). Catalyzes the methylthiolation of N6-(dimethylallyl)adenosine (i(6)A), leading to the formation of 2-methylthio-N6-(dimethylallyl)adenosine (ms(2)i(6)A) at position 37 in tRNAs that read codons beginning with uridine. This Shewanella pealeana (strain ATCC 700345 / ANG-SQ1) protein is tRNA-2-methylthio-N(6)-dimethylallyladenosine synthase.